We begin with the raw amino-acid sequence, 198 residues long: MAHYISLFVRAVFVENMALAFFLGMCTFLAVSKKVSTASGLGVAVTVVLGLAVPINNLVYNLVLRDGALVEGVDLSFLNFITFIGVIAALVQILEMILDKYFPALYNALGIFLPLIAVNCAIFGGVSFMVQRDYNFPESIVYGFGSGIGWMLAIVAMAGIREKMKYANVPAGLRGLGITFITTGLMALGFMSFSGVQL.

6 helical membrane passes run 11 to 31 (AVFV…FLAV), 35 to 55 (VSTA…AVPI), 77 to 97 (FLNF…LEMI), 110 to 130 (GIFL…SFMV), 140 to 160 (IVYG…MAGI), and 176 to 196 (LGIT…FSGV).

This sequence belongs to the NqrDE/RnfAE family. As to quaternary structure, composed of six subunits; NqrA, NqrB, NqrC, NqrD, NqrE and NqrF.

It is found in the cell inner membrane. It catalyses the reaction a ubiquinone + n Na(+)(in) + NADH + H(+) = a ubiquinol + n Na(+)(out) + NAD(+). Functionally, NQR complex catalyzes the reduction of ubiquinone-1 to ubiquinol by two successive reactions, coupled with the transport of Na(+) ions from the cytoplasm to the periplasm. NqrA to NqrE are probably involved in the second step, the conversion of ubisemiquinone to ubiquinol. The polypeptide is Na(+)-translocating NADH-quinone reductase subunit E (Klebsiella pneumoniae subsp. pneumoniae (strain ATCC 700721 / MGH 78578)).